The sequence spans 78 residues: Apolipoprotein C-I (78 aa).

The signal sequence occupies residues 1–26 (MRLILWLPVLVVVLLMVLEGPAPAQG).

Belongs to the apolipoprotein C1 family.

The protein localises to the secreted. Inhibitor of lipoprotein binding to the low density lipoprotein (LDL) receptor, LDL receptor-related protein, and very low density lipoprotein (VLDL) receptor. Associates with high density lipoproteins (HDL) and the triacylglycerol-rich lipoproteins in the plasma and makes up about 10% of the protein of the VLDL and 2% of that of HDL. Appears to interfere directly with fatty acid uptake and is also the major plasma inhibitor of cholesteryl ester transfer protein (CETP). Binds free fatty acids and reduces their intracellular esterification. Modulates the interaction of APOE with beta-migrating VLDL and inhibits binding of beta-VLDL to the LDL receptor-related protein. The polypeptide is Apolipoprotein C-I (APOC1) (Puma concolor (Mountain lion)).